We begin with the raw amino-acid sequence, 266 residues long: Phosphatidylglycerol--prolipoprotein diacylglyceryl transferase (266 aa).

A run of 7 helical transmembrane segments spans residues 10–30 (VALA…LIGI), 56–76 (LVFW…VLFY), 92–112 (WKGG…VWWF), 120–140 (FFQL…AGRI), 171–191 (PSQL…LWLF), 199–219 (ASVS…VEFV), and 233–253 (WLTM…ALMV). A 1,2-diacyl-sn-glycero-3-phospho-(1'-sn-glycerol) is bound at residue R139.

Belongs to the Lgt family.

Its subcellular location is the cell inner membrane. It carries out the reaction L-cysteinyl-[prolipoprotein] + a 1,2-diacyl-sn-glycero-3-phospho-(1'-sn-glycerol) = an S-1,2-diacyl-sn-glyceryl-L-cysteinyl-[prolipoprotein] + sn-glycerol 1-phosphate + H(+). Its pathway is protein modification; lipoprotein biosynthesis (diacylglyceryl transfer). In terms of biological role, catalyzes the transfer of the diacylglyceryl group from phosphatidylglycerol to the sulfhydryl group of the N-terminal cysteine of a prolipoprotein, the first step in the formation of mature lipoproteins. This Pseudomonas aeruginosa (strain LESB58) protein is Phosphatidylglycerol--prolipoprotein diacylglyceryl transferase.